The following is a 409-amino-acid chain: NADH-ubiquinone oxidoreductase chain 4 (409 aa).

The next 13 helical transmembrane spans lie at 10–30, 44–64, 76–96, 98–118, 120–140, 160–180, 194–214, 221–241, 245–265, 271–291, 305–325, 353–373, and 389–409; these read LWLFKPIYFLLFTVMFSFLIF, SYSFILLIVMSLFILGIIVIS, ILVFICIIFFIPSNMMMLYMF, ELSMFPILVMILGYGSQIEKI, SSYYLMFYAAFCSFPFLFVYF, FFILSLSFMMKFPIYFLHLWL, LLAGLLLKLGTAGFLRILGSL, VWILIAFLGMILGSFCCVFQS, ALAAYSSVTHMSFLLLSLVFI, ISSVMLMLAHGYTSTLMFYLI, FMSSFFSSSMIMGILFSVVFL, MFVMIFIYFVVSFYYSLFLIT, and VGFSAPLVLMMYNVFWLSVFY.

This sequence belongs to the complex I subunit 4 family.

It localises to the mitochondrion membrane. The enzyme catalyses a ubiquinone + NADH + 5 H(+)(in) = a ubiquinol + NAD(+) + 4 H(+)(out). Functionally, core subunit of the mitochondrial membrane respiratory chain NADH dehydrogenase (Complex I) that is believed to belong to the minimal assembly required for catalysis. Complex I functions in the transfer of electrons from NADH to the respiratory chain. The immediate electron acceptor for the enzyme is believed to be ubiquinone. In Caenorhabditis elegans, this protein is NADH-ubiquinone oxidoreductase chain 4.